A 291-amino-acid chain; its full sequence is Pituitary-specific positive transcription factor 1 (291 aa).

The short motif at 5 to 13 (PFTSADTFI) is the 9aaTAD element. Residues 124 to 198 (MDSPEIRELE…ILSKWLEEAE (75 aa)) form the POU-specific domain. A DNA-binding region (homeobox) is located at residues 214–273 (KRKRRTTISIAAKDALERHFGEQNKPSSQEILRMAEELNLEKEVVRVWFCNRRQREKRVK).

Belongs to the POU transcription factor family. Class-1 subfamily. Interacts with PITX1. Interacts with LHX3. Interacts with ELK1.

It localises to the nucleus. Its function is as follows. Transcription factor involved in the specification of the lactotrope, somatotrope, and thyrotrope phenotypes in the developing anterior pituitary. Activates growth hormone and prolactin genes. Specifically binds to the consensus sequence 5'-TAAAT-3'. The protein is Pituitary-specific positive transcription factor 1 (POU1F1) of Sus scrofa (Pig).